Consider the following 636-residue polypeptide: MSESATANANRETLGFQAEVKQLLQLMIHSLYSNKEIFLRELVSNASDACDKLRFEALNNSALYGDDSELKIRIAFDKDARTITISDNGIGLSRDEAVEHLGTIAKSGTKEFFSALTGDQAKDAHLIGQFGVGFYSSFIIADKVTVVSRRAGVEANQAVCWESGGEGDYTVEMVEKATRGTDVTLHLREGEDEFLGGWKLKSIIRKYSDHITLPIVMKKEDWKDGEQVMTEEDETVNQANALWVRSKSDITEEQYKEFYKHVAHDFEDPLAWTHARVEGKQEYTQLLYIPARAPFDLWDRNARHGIKLYVRRVFIMDDAEQLMPLYMRFVRGVVDSSDLPLNVSREILQQSKDIDGIRSGCTRKVLGMLEDLAENDKEKYAKFWEAFGSVLKEGVGEDHANKEKIAGLIRFSSTHNDTAEQNVSLADYIGRMKEGQEKIYFVTADTFNAAKNSPHLEIFRKKGIEVLLLSDRVDEWVVGHLTEFDGKHLQSVAKGGLDLGKLEDEAEKQEAEKAADDYKELLEKVKTSLGDKVKDVRVTYRLTDSPSCLVSDEHDPSGNLARLMKAAGQPMPNSKPILEINPQHPAVMRLKYEESRFDDWAALLFEQATLAEGGQLDDPAGFVKRINDLMMALSAK.

The a; substrate-binding stretch occupies residues 1–345 (MSESATANAN…SSDLPLNVSR (345 aa)). Residues 346–562 (EILQQSKDID…EHDPSGNLAR (217 aa)) are b. The c stretch occupies residues 563–636 (LMKAAGQPMP…NDLMMALSAK (74 aa)).

This sequence belongs to the heat shock protein 90 family. As to quaternary structure, homodimer.

It is found in the cytoplasm. Functionally, molecular chaperone. Has ATPase activity. This chain is Chaperone protein HtpG, found in Dechloromonas aromatica (strain RCB).